An 806-amino-acid polypeptide reads, in one-letter code: Exonuclease 1 (806 aa).

Residues 1-99 (MGIQGLLQFI…KSRRERRQAN (99 aa)) are N-domain. Residues D30, D78, E150, D152, D171, D173, and D225 each contribute to the Mg(2+) site. Positions 138–229 (RTRGVDCVVA…ILSGCDYLQS (92 aa)) are I-domain. Disordered stretches follow at residues 337–426 (RIDD…EDTS), 443–475 (HCPETQPTTKPLTNDNKVSKENHCGSTSGPFRP), and 512–754 (ETQE…SPGL). Residues 355-378 (RSSSWNDRCDKTATTQASIWSQNY) show a composition bias toward polar residues. Positions 412-425 (PQRESQVKRPREDT) are enriched in basic and acidic residues. 3 stretches are compositionally biased toward polar residues: residues 447-458 (TQPTTKPLTNDN), 533-542 (SQSGGDTSSL), and 578-589 (WSGTTKELNKSV). Residues 592–601 (PARDSTERQR) are compositionally biased toward basic and acidic residues. Residues 602 to 615 (SSSTPSGLSTLQQF) show a composition bias toward polar residues. A compositionally biased stretch (low complexity) spans 651–670 (SQDSAYFSQSSSISASVENS). Residues 676 to 685 (NSDKEKERDS) are compositionally biased toward basic and acidic residues. Positions 686–696 (VVSNSPSSSPL) are enriched in low complexity. The segment covering 744–754 (KNVNNENSPGL) has biased composition (polar residues).

Belongs to the XPG/RAD2 endonuclease family. EXO1 subfamily. It depends on Mg(2+) as a cofactor.

It localises to the nucleus. Functionally, 5'-&gt;3' double-stranded DNA exonuclease which may also contain a cryptic 3'-&gt;5' double-stranded DNA exonuclease activity. Also exhibits endonuclease activity against 5'-overhanging flap structures similar to those generated by displacement synthesis when DNA polymerase encounters the 5'-end of a downstream Okazaki fragment. Required for DNA mismatch repair (MMR). The protein is Exonuclease 1 (exo1) of Danio rerio (Zebrafish).